Reading from the N-terminus, the 581-residue chain is Pyridine nucleotide-disulfide oxidoreductase domain-containing protein 2 (581 aa).

An FAD-binding site is contributed by 38–71 (VVIGAGHNGLVAAAYLQRLGVNTAVFERRHVIGG).

The protein belongs to the carotenoid/retinoid oxidoreductase family. In terms of assembly, interacts with COX5B; this interaction may contribute to localize PYROXD2 to the inner face of the inner mitochondrial membrane.

It localises to the mitochondrion matrix. Probable oxidoreductase that may play a role as regulator of mitochondrial function. This chain is Pyridine nucleotide-disulfide oxidoreductase domain-containing protein 2, found in Homo sapiens (Human).